The sequence spans 321 residues: Beta-1,3-N-acetylglucosaminyltransferase manic fringe (321 aa).

The Cytoplasmic segment spans residues 1 to 7 (MQCRLPR). The helical; Signal-anchor for type II membrane protein transmembrane segment at 8-27 (GLAGALLTLLCMGLLCLRYH) threads the bilayer. At 28–321 (LNLSPQRVQE…TPWCPQLGAR (294 aa)) the chain is on the lumenal side. Arg-70 serves as a coordination point for substrate. N-linked (GlcNAc...) asparagine glycosylation occurs at Asn-109. Disulfide bonds link Cys-110-Cys-121 and Cys-139-Cys-202. Asp-143 contacts substrate. Position 144 (Asp-144) interacts with Mn(2+). Asn-185 carries N-linked (GlcNAc...) asparagine glycosylation. The active site involves Asp-232. A Mn(2+)-binding site is contributed by His-256. The cysteines at positions 306 and 315 are disulfide-linked.

This sequence belongs to the glycosyltransferase 31 family. Mn(2+) serves as cofactor.

The protein localises to the golgi apparatus membrane. The catalysed reaction is 3-O-(alpha-L-fucosyl)-L-threonyl-[EGF-like domain protein] + UDP-N-acetyl-alpha-D-glucosamine = 3-O-(N-acetyl-beta-D-glucosaminyl-(1-&gt;3)-alpha-L-fucosyl)-L-threonyl-[EGF-like domain protein] + UDP + H(+). It carries out the reaction 3-O-(alpha-L-fucosyl)-L-seryl-[EGF-like domain protein] + UDP-N-acetyl-alpha-D-glucosamine = 3-O-(N-acetyl-beta-D-glucosaminyl-(1-&gt;3)-alpha-L-fucosyl)-L-seryl-[EGF-like domain protein] + UDP + H(+). Its function is as follows. Glycosyltransferase that initiates the elongation of O-linked fucose residues attached to EGF-like repeats in the extracellular domain of Notch molecules. Modulates NOTCH1 activity by modifying O-fucose residues at specific EGF-like domains resulting in inhibition of NOTCH1 activation by JAG1 and enhancement of NOTCH1 activation by DLL1 via an increase in its binding to DLL1. The sequence is that of Beta-1,3-N-acetylglucosaminyltransferase manic fringe (MFNG) from Pan troglodytes (Chimpanzee).